The following is a 109-amino-acid chain: Elongation factor G, chloroplastic (109 aa).

It belongs to the GTP-binding elongation factor family. EF-G/EF-2 subfamily.

The protein resides in the plastid. Its subcellular location is the chloroplast. Its pathway is protein biosynthesis; polypeptide chain elongation. Chloroplast-localized elongation factor EF-G involved in protein synthesis in plastids. Catalyzes the GTP-dependent ribosomal translocation step during translation elongation. During this step, the ribosome changes from the pre-translocational (PRE) to the post-translocational (POST) state as the newly formed A-site-bound peptidyl-tRNA and P-site-bound deacylated tRNA move to the P and E sites, respectively. Catalyzes the coordinated movement of the two tRNA molecules, the mRNA and conformational changes in the ribosome. The protein is Elongation factor G, chloroplastic of Arachis hypogaea (Peanut).